The sequence spans 277 residues: Knob-associated histidine-rich protein (277 aa).

Disordered stretches follow at residues 95-114 (DGSHGNLRGHDNKGSEGYGY) and 162-277 (SSVN…KKKK). 2 stretches are compositionally biased toward basic and acidic residues: residues 169 to 190 (KHGDEKHHSSKKHEGNDGEGEK) and 211 to 220 (KDNEDAESVK). Over residues 221–237 (SKKHKSHDCEKKKSKKH) the composition is skewed to basic residues. Composition is skewed to basic and acidic residues over residues 238–259 (KDNEDAESVKSKKSVKEKGEKH) and 268–277 (KTNEEKKKKK).

Its subcellular location is the secreted. KAHRP might mimick human histidine-rich glycoproteins to anchor host thrombospondin or a parasite analog in a binding complex with the endothelial cell receptor. The protein is Knob-associated histidine-rich protein of Plasmodium falciparum (isolate CDC / Honduras).